Reading from the N-terminus, the 340-residue chain is Ferrochelatase (340 aa).

Fe cation contacts are provided by histidine 189 and glutamate 292.

This sequence belongs to the ferrochelatase family.

The protein resides in the cytoplasm. The catalysed reaction is heme b + 2 H(+) = protoporphyrin IX + Fe(2+). It functions in the pathway porphyrin-containing compound metabolism; protoheme biosynthesis; protoheme from protoporphyrin-IX: step 1/1. Functionally, catalyzes the ferrous insertion into protoporphyrin IX. In Pseudomonas syringae pv. tomato (strain ATCC BAA-871 / DC3000), this protein is Ferrochelatase.